A 337-amino-acid chain; its full sequence is Hsp90 co-chaperone Cdc37-like 1 (337 aa).

Pro residues predominate over residues methionine 1–tryptophan 11. The segment at methionine 1 to glycine 40 is disordered. Positions glutamate 2–methionine 171 are self-association. Residues serine 32 and serine 88 each carry the phosphoserine modification. Residues histidine 84–lysine 122 adopt a coiled-coil conformation. Residues lysine 147–glutamine 277 are self-association and interaction with Hsp90. The segment at lysine 267 to valine 337 is interaction with Hsp70. The segment at serine 278–valine 337 is required for interaction with STIP1.

It belongs to the CDC37 family. Self-associates. Forms complexes with Hsp70 and Hsp90. Interacts with CDC37, FKBP4, PPID and STIP1. Expressed in brain, heart, kidney, liver, placenta and skeletal muscle.

It localises to the cytoplasm. Its function is as follows. Co-chaperone that binds to numerous proteins and promotes their interaction with Hsp70 and Hsp90. The sequence is that of Hsp90 co-chaperone Cdc37-like 1 (CDC37L1) from Homo sapiens (Human).